The primary structure comprises 98 residues: Transcription elongation factor A protein-like 7 (98 aa).

Positions 1-24 (MQRSCNEKEGKPKCSEPKREEEHP) are enriched in basic and acidic residues. Residues 1 to 31 (MQRSCNEKEGKPKCSEPKREEEHPYGAFEGQ) are disordered. A coiled-coil region spans residues 59–89 (GEEMTGEEEEMERCLEEIRSLRKKFRALHSN).

Belongs to the TFS-II family. TFA subfamily.

Its subcellular location is the nucleus. Its function is as follows. Plays a role in the negative regulation of NF-kappa-B signaling at the basal level by modulating transcriptional activity of NF-kappa-B on its target gene promoters. Associates with cyclin D1 promoter containing Myc E-box sequence and transcriptionally represses cyclin D1 expression. Regulates telomerase reverse transcriptase expression and telomerase activity in both ALT (alternative lengthening of telomeres)and telomerase-positive cell lines. The protein is Transcription elongation factor A protein-like 7 (Tceal7) of Rattus norvegicus (Rat).